The primary structure comprises 210 residues: MADTKEMKAVLFGPVLANNPIALQVLGICSALAVTSSLKNALIMSIALTLVTAFSSFFISTIRNQIPSSVRIIVQMTIIASLVIVVDQVLQAFSYATAKELSVFIGLIITNCIVMGRAEAYAMKSPPLMSFLDGIGNGLGYSVVLLTVGFIRELFGKGSLFGVDIIPLVQNGGWYQPMGLLILPPSAFFIIGLFIWVLRTYKKDQVEAKA.

6 helical membrane passes run 9–29 (AVLF…LGIC), 42–62 (LIMS…ISTI), 72–92 (IIVQ…VLQA), 96–116 (ATAK…IVMG), 131–151 (FLDG…VGFI), and 178–198 (MGLL…IWVL).

Belongs to the NqrDE/RnfAE family. As to quaternary structure, composed of six subunits; NqrA, NqrB, NqrC, NqrD, NqrE and NqrF.

It is found in the cell inner membrane. The enzyme catalyses a ubiquinone + n Na(+)(in) + NADH + H(+) = a ubiquinol + n Na(+)(out) + NAD(+). Its function is as follows. NQR complex catalyzes the reduction of ubiquinone-1 to ubiquinol by two successive reactions, coupled with the transport of Na(+) ions from the cytoplasm to the periplasm. NqrA to NqrE are probably involved in the second step, the conversion of ubisemiquinone to ubiquinol. This is Na(+)-translocating NADH-quinone reductase subunit D from Pseudoalteromonas translucida (strain TAC 125).